The chain runs to 233 residues: Probable transglycosylase IsaA (233 aa).

Positions 1–29 (MKKTIMASSLAVALGVTGYAAGTGHQAHA) are cleaved as a signal peptide.

This sequence belongs to the transglycosylase family. IsaA subfamily.

It localises to the secreted. Its function is as follows. Is able to cleave peptidoglycan. This chain is Probable transglycosylase IsaA (isaA), found in Staphylococcus aureus (strain Mu3 / ATCC 700698).